The sequence spans 593 residues: UvrABC system protein C (593 aa).

Positions 17 to 94 (MEPGCYLMKD…IKQYQPRYNI (78 aa)) constitute a GIY-YIG domain. Residues 199-234 (KTILKSLEERMLTASESLDFERAKEYRDLIQHIQNL) form the UVR domain.

This sequence belongs to the UvrC family. In terms of assembly, interacts with UvrB in an incision complex.

It is found in the cytoplasm. Functionally, the UvrABC repair system catalyzes the recognition and processing of DNA lesions. UvrC both incises the 5' and 3' sides of the lesion. The N-terminal half is responsible for the 3' incision and the C-terminal half is responsible for the 5' incision. In Staphylococcus aureus (strain Mu3 / ATCC 700698), this protein is UvrABC system protein C.